Here is a 717-residue protein sequence, read N- to C-terminus: DNA ligase (717 aa).

NAD(+) contacts are provided by residues 44–48 (DADYD), 93–94 (SL), and Glu-127. The active-site N6-AMP-lysine intermediate is Lys-129. The NAD(+) site is built by Arg-150, Glu-186, Lys-302, and Lys-326. Zn(2+)-binding residues include Cys-431, Cys-434, Cys-455, and Cys-461. One can recognise a BRCT domain in the interval 639-717 (ATDSPVAGKT…EDEWLALIGG (79 aa)).

It belongs to the NAD-dependent DNA ligase family. LigA subfamily. It depends on Mg(2+) as a cofactor. Requires Mn(2+) as cofactor.

The catalysed reaction is NAD(+) + (deoxyribonucleotide)n-3'-hydroxyl + 5'-phospho-(deoxyribonucleotide)m = (deoxyribonucleotide)n+m + AMP + beta-nicotinamide D-nucleotide.. DNA ligase that catalyzes the formation of phosphodiester linkages between 5'-phosphoryl and 3'-hydroxyl groups in double-stranded DNA using NAD as a coenzyme and as the energy source for the reaction. It is essential for DNA replication and repair of damaged DNA. The polypeptide is DNA ligase (Rhizobium meliloti (strain 1021) (Ensifer meliloti)).